We begin with the raw amino-acid sequence, 248 residues long: 3-deoxy-manno-octulosonate cytidylyltransferase (248 aa).

This sequence belongs to the KdsB family.

It localises to the cytoplasm. It carries out the reaction 3-deoxy-alpha-D-manno-oct-2-ulosonate + CTP = CMP-3-deoxy-beta-D-manno-octulosonate + diphosphate. Its pathway is nucleotide-sugar biosynthesis; CMP-3-deoxy-D-manno-octulosonate biosynthesis; CMP-3-deoxy-D-manno-octulosonate from 3-deoxy-D-manno-octulosonate and CTP: step 1/1. It participates in bacterial outer membrane biogenesis; lipopolysaccharide biosynthesis. Its function is as follows. Activates KDO (a required 8-carbon sugar) for incorporation into bacterial lipopolysaccharide in Gram-negative bacteria. The chain is 3-deoxy-manno-octulosonate cytidylyltransferase from Cronobacter sakazakii (strain ATCC BAA-894) (Enterobacter sakazakii).